The following is a 1829-amino-acid chain: Sodium channel protein type 4 subunit alpha A (1829 aa).

The Cytoplasmic portion of the chain corresponds to 1–124 (MARLLPPTGT…RGAIKILIHS (124 aa)). The tract at residues 32–52 (STREELEGAEEEPQAPSSDLE) is disordered. Residues 106–421 (CISPFSIVRR…VVAMAYDEQN (316 aa)) form an I repeat. A helical membrane pass occupies residues 125 to 143 (LFSMFIMITILSNCVFMTM). Over 144–150 (SNPPAWS) the chain is Extracellular. The helical transmembrane segment at 151-171 (KTVEYVFTGIYTFEATVKVLS) threads the bilayer. Over 172-185 (RGFCIGPFTFLRDP) the chain is Cytoplasmic. A helical membrane pass occupies residues 186–203 (WNWLDFMVISMAYVTEFV). Over 204 to 209 (DLGNVS) the chain is Extracellular. N-linked (GlcNAc...) asparagine glycosylation occurs at Asn207. A helical transmembrane segment spans residues 210–226 (ALRTFRVLRALKTITVI). At 227-245 (PGLKTIVGALIQSVKKMID) the chain is on the cytoplasmic side. A helical membrane pass occupies residues 246-265 (VMILTIFALAVFALIGLQLF). Residues 266–358 (MGNLRQKCIR…PNYGYTSYDN (93 aa)) are Extracellular-facing. Cysteines 273 and 327 form a disulfide. N-linked (GlcNAc...) asparagine glycans are attached at residues Asn280, Asn293, and Asn329. Cys336 and Cys342 are oxidised to a cystine. The segment at residues 359-383 (FGWAFLALFRLMTQDFWENLFQLTL) is an intramembrane region (pore-forming). The Extracellular portion of the chain corresponds to 384–390 (RAAGKTY). A helical membrane pass occupies residues 391–411 (MIFFVVVIFLGSFYLINLILA). The Cytoplasmic portion of the chain corresponds to 412–582 (VVAMAYDEQN…KWVHFVVMDP (171 aa)). Positions 446–467 (ETGSKASLASQKTQSRGSNRTG) are enriched in polar residues. The interval 446-468 (ETGSKASLASQKTQSRGSNRTGS) is disordered. An II repeat occupies 564 to 836 (CCAPWILFKK…QIAIGRITRG (273 aa)). Residues 583-601 (FVDLGITICIVLNTLFMAM) traverse the membrane as a helical segment. Topologically, residues 602 to 612 (EHYPMSPHFEH) are extracellular. A helical transmembrane segment spans residues 613-632 (VLSVGNLVFTGIFTAEMVFK). The Cytoplasmic portion of the chain corresponds to 633-646 (LIAMDPYYYFQVGW). Residues 647 to 666 (NIFDSIIVTLSLVELGLANV) traverse the membrane as a helical segment. Topologically, residues 667-668 (QG) are extracellular. Residues 669–686 (LSVLRSFRLLRVFKLAKS) traverse the membrane as a helical segment. The Cytoplasmic segment spans residues 687–702 (WPTLNMLIKIIGNSVG). The helical transmembrane segment at 703-721 (ALGNLTLVLAIIVFIFAVV) threads the bilayer. Residues 722–750 (GMQLFGKSYKDCVCKISEDCELPRWHMND) are Extracellular-facing. Residues Cys735 and Cys741 are joined by a disulfide bond. Positions 751-771 (FFHSFLIVFRILCGEWIETMW) form an intramembrane region, pore-forming. At 772 to 782 (DCMEVAGASMC) the chain is on the extracellular side. Cysteines 773 and 782 form a disulfide. A helical membrane pass occupies residues 783–801 (LIVFMMVMVIGNLVVLNLF). The Cytoplasmic portion of the chain corresponds to 802 to 998 (LALLLSSFSG…TCFTIVEHDY (197 aa)). The disordered stretch occupies residues 901–957 (SDVEEDEDSESSDEEDAKATLNDGDSSVCSTVDYQPPEPEPEPEEVEEEEPEPEEPE). Residues 902–916 (DVEEDEDSESSDEED) show a composition bias toward acidic residues. Polar residues predominate over residues 923 to 933 (DGDSSVCSTVD). Positions 939–957 (PEPEPEEVEEEEPEPEEPE) are enriched in acidic residues. The stretch at 979–1292 (WGKKWWNLRR…KKYYNAMKKL (314 aa)) is one III repeat. The helical transmembrane segment at 999-1016 (FETFIIFMILLSSGALAF) threads the bilayer. Residues 1017-1029 (EDINIERRRVIKT) lie on the Extracellular side of the membrane. Residues 1030 to 1048 (ILEYADKVFTYIFIVEMLL) form a helical membrane-spanning segment. Residues 1049-1062 (KWVAYGFKTYFTNA) lie on the Cytoplasmic side of the membrane. Residues 1063–1081 (WCWLDFLIVDVSLVSLTAN) form a helical membrane-spanning segment. Residues 1082-1089 (LMGYSELG) lie on the Extracellular side of the membrane. Residues 1090–1108 (AIKSLRTLRALRPLRALSR) traverse the membrane as a helical segment. Residues 1109–1125 (FEGMRVVVNALVGAIPS) are Cytoplasmic-facing. The helical transmembrane segment at 1126–1145 (IFNVLLVCLIFWLIFSIMGV) threads the bilayer. Residues 1146–1196 (NLFAGKFYHCINTTTEERIPMDVVNNKSDCMALMYTNEVRWVNVKVNYDNV) lie on the Extracellular side of the membrane. Cys1155 and Cys1175 are joined by a disulfide. N-linked (GlcNAc...) asparagine glycosylation is found at Asn1157 and Asn1171. Residues 1197-1218 (GLGYLSLLQIATFKGWMDIMYA) constitute an intramembrane region (pore-forming). The Extracellular segment spans residues 1219-1235 (AVDSREVDEQPSYEINL). The helical transmembrane segment at 1236–1257 (YMYLYFVIFIIFGSFFTLNLFI) threads the bilayer. Topologically, residues 1258–1320 (GVIIDNFNQQ…LVFDFISKQF (63 aa)) are cytoplasmic. The important for rapid channel inactivation stretch occupies residues 1276 to 1278 (IFM). Residues 1301-1599 (IPRPSNIIQG…WEKFDVDATQ (299 aa)) form an IV repeat. A helical transmembrane segment spans residues 1321-1338 (FDIFIMVLICLNMVTMMI). Over 1339–1349 (ETDDQSAEKEY) the chain is Extracellular. Residues 1350–1368 (VLYQINLVFIVVFTSECVL) traverse the membrane as a helical segment. Residues 1369–1380 (KLFALRQYFFTI) lie on the Cytoplasmic side of the membrane. The chain crosses the membrane as a helical span at residues 1381–1398 (GWNVFDFVVVILSIAGLM). At 1399–1411 (LSDIIEKYFVSPT) the chain is on the extracellular side. The chain crosses the membrane as a helical span at residues 1412 to 1428 (LFRVIRLARIGRVLRLI). Topologically, residues 1429-1447 (RGAKGIRTLLFALMMSLPA) are cytoplasmic. The chain crosses the membrane as a helical span at residues 1448-1465 (LFNIGLLLFLIMFIFSIF). Topologically, residues 1466–1487 (GMSNFAYVKKQAGIDDIFNFET) are extracellular. Residues 1488-1510 (FGGSIICLFEITTSAGWDGLLLP) constitute an intramembrane region (pore-forming). Residues 1511 to 1540 (ILNSGPPDCDPDFENPGTDVRGNCGNPGMG) lie on the Extracellular side of the membrane. A disulfide bond links Cys1519 and Cys1534. Residues 1541-1563 (IMFFCSYIIMSFLVVVNMYIAII) form a helical membrane-spanning segment. Over 1564 to 1829 (LENFNNAQEE…NATTIKESIV (266 aa)) the chain is Cytoplasmic. One can recognise an IQ domain in the interval 1693–1722 (EERAAIAVQRIYRRHLLKRAIRYACFMRRS). A disordered region spans residues 1765 to 1786 (PMRPNSQPPKPSQVTQTRASVT).

The protein belongs to the sodium channel (TC 1.A.1.10) family. Nav1.4/SCN4A subfamily. Voltage-gated sodium (Nav) channels consist of an ion-conducting alpha subunit which is functional on its own associated with regulatory beta subunits. In terms of tissue distribution, expressed in skeletal muscle, brain, spinal cord, and eye.

It is found in the cell membrane. The enzyme catalyses Na(+)(in) = Na(+)(out). Pore-forming subunit of a voltage-gated sodium (Nav) channel that directly mediates the depolarizing phase of action potentials in excitable membranes. Navs, also called VGSCs (voltage-gated sodium channels) or VDSCs (voltage-dependent sodium channels), operate by switching between closed and open conformations depending on the voltage difference across the membrane. In the open conformation they allow Na(+) ions to selectively pass through the pore, along their electrochemical gradient. The influx of Na+ ions provokes membrane depolarization, initiating the propagation of electrical signals throughout cells and tissues. The protein is Sodium channel protein type 4 subunit alpha A (scn4aa) of Danio rerio (Zebrafish).